Consider the following 101-residue polypeptide: MAAKLRKGDKVVVLAGRDKGKEGTIASVDPKAGKAVVDGVNMAIRHTRQTQTSQGGRLPKALPIDLSNLALLDSNGKATRVGFREEDGKKVRFAKTTGETV.

Belongs to the universal ribosomal protein uL24 family. As to quaternary structure, part of the 50S ribosomal subunit.

One of two assembly initiator proteins, it binds directly to the 5'-end of the 23S rRNA, where it nucleates assembly of the 50S subunit. Functionally, one of the proteins that surrounds the polypeptide exit tunnel on the outside of the subunit. This is Large ribosomal subunit protein uL24 from Ruegeria sp. (strain TM1040) (Silicibacter sp.).